Consider the following 106-residue polypeptide: Iron-sulfur cluster assembly protein CyaY (106 aa).

Belongs to the frataxin family.

Its function is as follows. Involved in iron-sulfur (Fe-S) cluster assembly. May act as a regulator of Fe-S biogenesis. The sequence is that of Iron-sulfur cluster assembly protein CyaY from Salmonella typhimurium (strain LT2 / SGSC1412 / ATCC 700720).